Reading from the N-terminus, the 190-residue chain is Xanthine phosphoribosyltransferase (190 aa).

Leucine 20 and asparagine 27 together coordinate xanthine. 127–131 is a 5-phospho-alpha-D-ribose 1-diphosphate binding site; it reads AYGNA. Lysine 155 contributes to the xanthine binding site.

The protein belongs to the purine/pyrimidine phosphoribosyltransferase family. Xpt subfamily. Homodimer.

It is found in the cytoplasm. It catalyses the reaction XMP + diphosphate = xanthine + 5-phospho-alpha-D-ribose 1-diphosphate. Its pathway is purine metabolism; XMP biosynthesis via salvage pathway; XMP from xanthine: step 1/1. Converts the preformed base xanthine, a product of nucleic acid breakdown, to xanthosine 5'-monophosphate (XMP), so it can be reused for RNA or DNA synthesis. The sequence is that of Xanthine phosphoribosyltransferase from Bacteroides thetaiotaomicron (strain ATCC 29148 / DSM 2079 / JCM 5827 / CCUG 10774 / NCTC 10582 / VPI-5482 / E50).